A 171-amino-acid chain; its full sequence is Iron-sulfur cluster assembly protein 1 (171 aa).

Residues 1–55 constitute a mitochondrion transit peptide; the sequence is MLRAGGRRLLAPGLRRVLGGGAAAPVAVGGAKAYHERVVDHYENPRNVGSFENDD.

The protein belongs to the NifU family. As to quaternary structure, component of the core Fe-S cluster (ISC) assembly machinery. The cofactor is [2Fe-2S] cluster.

The protein resides in the mitochondrion matrix. The protein operates within cofactor biosynthesis; iron-sulfur cluster biosynthesis. Functionally, scaffold protein for the de novo synthesis of iron-sulfur (Fe-S) clusters within mitochondria, which is required for maturation of both mitochondrial and cytoplasmic [2Fe-2S] and [4Fe-4S] proteins. First, a [2Fe-2S] cluster is transiently assembled on the scaffold protein ISCU (ISU1, ISU2 or ISU3). In a second step, the cluster is released from ISCU, transferred to a glutaredoxin, followed by the formation of mitochondrial [2Fe-2S] proteins, the synthesis of [4Fe-4S] clusters and their target-specific insertion into the recipient apoproteins. Cluster assembly on ISCU depends on the function of the cysteine desulfurase complex NFS1-ISD11, which serves as the sulfur donor for cluster synthesis, the iron-binding protein frataxin as the putative iron donor, and the electron transfer chain comprised of ferredoxin reductase and ferredoxin, which receive their electrons from NADH. The protein is Iron-sulfur cluster assembly protein 1 of Oryza sativa subsp. japonica (Rice).